The chain runs to 402 residues: Argininosuccinate synthase (402 aa).

Residues 10 to 18 (AYSGGLDTS) and Ala-38 contribute to the ATP site. Tyr-90 contributes to the L-citrulline binding site. Gly-120 is an ATP binding site. L-aspartate contacts are provided by Thr-122, Asn-126, and Asp-127. An L-citrulline-binding site is contributed by Asn-126. 5 residues coordinate L-citrulline: Arg-130, Ser-179, Ser-188, Glu-264, and Tyr-276.

The protein belongs to the argininosuccinate synthase family. Type 1 subfamily. Homotetramer.

It is found in the cytoplasm. It carries out the reaction L-citrulline + L-aspartate + ATP = 2-(N(omega)-L-arginino)succinate + AMP + diphosphate + H(+). Its pathway is amino-acid biosynthesis; L-arginine biosynthesis; L-arginine from L-ornithine and carbamoyl phosphate: step 2/3. The protein is Argininosuccinate synthase of Psychromonas ingrahamii (strain DSM 17664 / CCUG 51855 / 37).